The primary structure comprises 236 residues: Small ribosomal subunit protein uS2 (236 aa).

This sequence belongs to the universal ribosomal protein uS2 family.

The sequence is that of Small ribosomal subunit protein uS2 from Brevibacillus brevis (strain 47 / JCM 6285 / NBRC 100599).